The following is a 445-amino-acid chain: Retrovirus-related Pol polyprotein from type-1 retrotransposable element R2 (445 aa).

The Reverse transcriptase domain maps to 1 to 114 (QPSVFNLVKW…LSRDDSLAKA (114 aa)). Positions 115–445 (MLASAGPAAE…GATPRQLIEY (331 aa)) are nucleic acid-binding endonuclease. Basic residues predominate over residues 380–389 (GPRPAHHHQP). The segment at 380-445 (GPRPAHHHQP…GATPRQLIEY (66 aa)) is disordered. Residues 396–405 (ATANTGTLQS) show a composition bias toward polar residues.

The enzyme catalyses DNA(n) + a 2'-deoxyribonucleoside 5'-triphosphate = DNA(n+1) + diphosphate. The sequence is that of Retrovirus-related Pol polyprotein from type-1 retrotransposable element R2 from Popillia japonica (Japanese beetle).